The sequence spans 207 residues: dITP/XTP pyrophosphatase (207 aa).

Residue 7-12 (SNNAKK) coordinates substrate. The Proton acceptor role is filled by Asp-72. Asp-72 is a Mg(2+) binding site. Residues Ser-73, 155-158 (FGYD), Lys-183, and 188-189 (HR) contribute to the substrate site.

This sequence belongs to the HAM1 NTPase family. In terms of assembly, homodimer. Mg(2+) serves as cofactor.

It carries out the reaction XTP + H2O = XMP + diphosphate + H(+). It catalyses the reaction dITP + H2O = dIMP + diphosphate + H(+). The enzyme catalyses ITP + H2O = IMP + diphosphate + H(+). Its function is as follows. Pyrophosphatase that catalyzes the hydrolysis of nucleoside triphosphates to their monophosphate derivatives, with a high preference for the non-canonical purine nucleotides XTP (xanthosine triphosphate), dITP (deoxyinosine triphosphate) and ITP. Seems to function as a house-cleaning enzyme that removes non-canonical purine nucleotides from the nucleotide pool, thus preventing their incorporation into DNA/RNA and avoiding chromosomal lesions. In Corynebacterium diphtheriae (strain ATCC 700971 / NCTC 13129 / Biotype gravis), this protein is dITP/XTP pyrophosphatase.